A 259-amino-acid chain; its full sequence is MQISPIAPELIRLENIYVHRDERDILKNIDFSLHQNEIVTLIGPNGAGKSTLIKILLGIIFPNKGKVIAKKKLKMAYVPQKFNPSHSLPLRVCDLLDLEKCSATLREEIIQDTGISKLQTAKVQQLSGGERQRVLLARALLRQPDILVLDEPMQGLDIQSEAELYEYVRSLPERYGCAILMVSHDLQWVMQGTQRVVCLNKHICCSGLPESVQQHPEYLAIFGGQRVPYQHHHDHCAHGDHVEQCNHIDHPHIHPEPEA.

The 215-residue stretch at 11–225 (IRLENIYVHR…PEYLAIFGGQ (215 aa)) folds into the ABC transporter domain. Residue 43-50 (GPNGAGKS) coordinates ATP.

This sequence belongs to the ABC transporter superfamily. Zinc importer (TC 3.A.1.15.5) family. The complex is composed of two ATP-binding proteins (ZnuC), two transmembrane proteins (ZnuB) and a solute-binding protein (ZnuA).

Its subcellular location is the cell inner membrane. It catalyses the reaction Zn(2+)(out) + ATP(in) + H2O(in) = Zn(2+)(in) + ADP(in) + phosphate(in) + H(+)(in). Functionally, part of the ABC transporter complex ZnuABC involved in zinc import. Responsible for energy coupling to the transport system. This chain is Zinc import ATP-binding protein ZnuC, found in Acinetobacter baylyi (strain ATCC 33305 / BD413 / ADP1).